Here is a 418-residue protein sequence, read N- to C-terminus: UPF0754 membrane protein alr5253 (418 aa).

2 helical membrane passes run 10–30 (WSHL…GYFT) and 394–414 (IVSL…AFFI).

Belongs to the UPF0754 family.

The protein localises to the cell inner membrane. The sequence is that of UPF0754 membrane protein alr5253 from Nostoc sp. (strain PCC 7120 / SAG 25.82 / UTEX 2576).